The primary structure comprises 365 residues: 4-hydroxy-tetrahydrodipicolinate synthase 1, chloroplastic (365 aa).

Residues 1-39 (MSALKNYGLISIDSALHFPRSNQLQSYKRRNAKWVSPIA) constitute a chloroplast transit peptide. A pyruvate-binding site is contributed by threonine 108. Tyrosine 194 functions as the Proton donor/acceptor in the catalytic mechanism. The active-site Schiff-base intermediate with substrate is the lysine 222. Isoleucine 261 lines the pyruvate pocket.

It belongs to the DapA family.

The protein localises to the plastid. It localises to the chloroplast. The catalysed reaction is L-aspartate 4-semialdehyde + pyruvate = (2S,4S)-4-hydroxy-2,3,4,5-tetrahydrodipicolinate + H2O + H(+). The protein operates within amino-acid biosynthesis; L-lysine biosynthesis via DAP pathway; (S)-tetrahydrodipicolinate from L-aspartate: step 3/4. Catalyzes the condensation of (S)-aspartate-beta-semialdehyde [(S)-ASA] and pyruvate to 4-hydroxy-tetrahydrodipicolinate (HTPA). The protein is 4-hydroxy-tetrahydrodipicolinate synthase 1, chloroplastic (DHDPS1) of Arabidopsis thaliana (Mouse-ear cress).